The sequence spans 472 residues: Cell division protein FtsP (472 aa).

Positions Met1–Ala27 form a signal peptide, tat-type signal.

The protein belongs to the FtsP family. Predicted to be exported by the Tat system. The position of the signal peptide cleavage has not been experimentally proven.

It is found in the periplasm. Its function is as follows. Cell division protein that is required for growth during stress conditions. May be involved in protecting or stabilizing the divisomal assembly under conditions of stress. In Dickeya dadantii (strain 3937) (Erwinia chrysanthemi (strain 3937)), this protein is Cell division protein FtsP.